The chain runs to 364 residues: Peptide chain release factor 1 (364 aa).

At glutamine 237 the chain carries N5-methylglutamine.

Belongs to the prokaryotic/mitochondrial release factor family. Post-translationally, methylated by PrmC. Methylation increases the termination efficiency of RF1.

The protein localises to the cytoplasm. Peptide chain release factor 1 directs the termination of translation in response to the peptide chain termination codons UAG and UAA. This is Peptide chain release factor 1 from Mycoplasma mycoides subsp. mycoides SC (strain CCUG 32753 / NCTC 10114 / PG1).